A 141-amino-acid chain; its full sequence is Hemoglobin subunit alpha-D (141 aa).

A Globin domain is found at 1–141 (MLTAEDKKLI…VAAVLAEKYR (141 aa)). Positions 58 and 87 each coordinate heme b.

It belongs to the globin family. In terms of assembly, heterotetramer of two alpha-D chains and two beta chains. Red blood cells.

Its function is as follows. Involved in oxygen transport from the lung to the various peripheral tissues. The protein is Hemoglobin subunit alpha-D (HBAD) of Cairina moschata (Muscovy duck).